The sequence spans 516 residues: Cytochrome P450 1A1 (516 aa).

Positions 25-36 (FRPQVPKGLKSP) are mitochondrial targeting signal. Ser63 carries O-linked (GlcNAc) serine glycosylation. Substrate is bound at residue Phe220. Cys453 is a heme binding site.

It belongs to the cytochrome P450 family. In terms of assembly, interacts with cytosolic chaperones HSP70 and HSP90; this interaction is required for initial targeting to mitochondria. Interacts (via mitochondrial targeting signal) with TOMM40 (via N-terminus); this interaction is required for translocation across the mitochondrial outer membrane. The cofactor is heme. Constitutively expressed in liver.

The protein resides in the endoplasmic reticulum membrane. It is found in the mitochondrion inner membrane. Its subcellular location is the microsome membrane. The protein localises to the cytoplasm. The catalysed reaction is an organic molecule + reduced [NADPH--hemoprotein reductase] + O2 = an alcohol + oxidized [NADPH--hemoprotein reductase] + H2O + H(+). It carries out the reaction estrone + reduced [NADPH--hemoprotein reductase] + O2 = 2-hydroxyestrone + oxidized [NADPH--hemoprotein reductase] + H2O + H(+). The enzyme catalyses estrone + reduced [NADPH--hemoprotein reductase] + O2 = 4-hydroxyestrone + oxidized [NADPH--hemoprotein reductase] + H2O + H(+). It catalyses the reaction estrone + reduced [NADPH--hemoprotein reductase] + O2 = 6alpha-hydroxyestrone + oxidized [NADPH--hemoprotein reductase] + H2O + H(+). The catalysed reaction is estrone + reduced [NADPH--hemoprotein reductase] + O2 = 15alpha-hydroxyestrone + oxidized [NADPH--hemoprotein reductase] + H2O + H(+). It carries out the reaction estrone + reduced [NADPH--hemoprotein reductase] + O2 = 16alpha-hydroxyestrone + oxidized [NADPH--hemoprotein reductase] + H2O + H(+). The enzyme catalyses 17beta-estradiol + reduced [NADPH--hemoprotein reductase] + O2 = 2-hydroxy-17beta-estradiol + oxidized [NADPH--hemoprotein reductase] + H2O + H(+). It catalyses the reaction 17beta-estradiol + reduced [NADPH--hemoprotein reductase] + O2 = 4-hydroxy-17beta-estradiol + oxidized [NADPH--hemoprotein reductase] + H2O + H(+). The catalysed reaction is 17beta-estradiol + reduced [NADPH--hemoprotein reductase] + O2 = 6alpha-hydroxy-17beta-estradiol + oxidized [NADPH--hemoprotein reductase] + H2O + H(+). It carries out the reaction 17beta-estradiol + reduced [NADPH--hemoprotein reductase] + O2 = 7alpha-hydroxy-17beta-estradiol + oxidized [NADPH--hemoprotein reductase] + H2O + H(+). The enzyme catalyses 17beta-estradiol + reduced [NADPH--hemoprotein reductase] + O2 = 15alpha-hydroxy-17beta-estradiol + oxidized [NADPH--hemoprotein reductase] + H2O + H(+). It catalyses the reaction (5Z,8Z,11Z)-eicosatrienoate + reduced [NADPH--hemoprotein reductase] + O2 = 19-hydroxy-(5Z,8Z,11Z)-eicosatrienoate + oxidized [NADPH--hemoprotein reductase] + H2O + H(+). The catalysed reaction is (5Z,8Z,11Z,14Z)-eicosatetraenoate + reduced [NADPH--hemoprotein reductase] + O2 = 16-hydroxy-(5Z,8Z,11Z,14Z)-eicosatetraenoate + oxidized [NADPH--hemoprotein reductase] + H2O + H(+). It carries out the reaction (5Z,8Z,11Z,14Z)-eicosatetraenoate + reduced [NADPH--hemoprotein reductase] + O2 = 17-hydroxy-(5Z,8Z,11Z,14Z)-eicosatetraenoate + oxidized [NADPH--hemoprotein reductase] + H2O + H(+). The enzyme catalyses (5Z,8Z,11Z,14Z)-eicosatetraenoate + reduced [NADPH--hemoprotein reductase] + O2 = 18-hydroxy-(5Z,8Z,11Z,14Z)-eicosatetraenoate + oxidized [NADPH--hemoprotein reductase] + H2O + H(+). It catalyses the reaction (5Z,8Z,11Z,14Z)-eicosatetraenoate + reduced [NADPH--hemoprotein reductase] + O2 = 19-hydroxy-(5Z,8Z,11Z,14Z)-eicosatetraenoate + oxidized [NADPH--hemoprotein reductase] + H2O + H(+). The catalysed reaction is (5Z,8Z,11Z,14Z,17Z)-eicosapentaenoate + reduced [NADPH--hemoprotein reductase] + O2 = 19-hydroxy-(5Z,8Z,11Z,14Z,17Z)-eicosapentaenoate + oxidized [NADPH--hemoprotein reductase] + H2O + H(+). It carries out the reaction (5Z,8Z,11Z,14Z)-eicosatetraenoate + reduced [NADPH--hemoprotein reductase] + O2 = (8R,9S)-epoxy-(5Z,11Z,14Z)-eicosatrienoate + oxidized [NADPH--hemoprotein reductase] + H2O + H(+). The enzyme catalyses (5Z,8Z,11Z,14Z)-eicosatetraenoate + reduced [NADPH--hemoprotein reductase] + O2 = (11R,12S)-epoxy-(5Z,8Z,14Z)-eicosatrienoate + oxidized [NADPH--hemoprotein reductase] + H2O + H(+). It catalyses the reaction (5Z,8Z,11Z,14Z)-eicosatetraenoate + reduced [NADPH--hemoprotein reductase] + O2 = (14S,15R)-epoxy-(5Z,8Z,11Z)-eicosatrienoate + oxidized [NADPH--hemoprotein reductase] + H2O + H(+). The catalysed reaction is (5Z,8Z,11Z,14Z)-eicosatetraenoate + reduced [NADPH--hemoprotein reductase] + O2 = (14R,15S)-epoxy-(5Z,8Z,11Z)-eicosatrienoate + oxidized [NADPH--hemoprotein reductase] + H2O + H(+). It carries out the reaction (5Z,8Z,11Z,14Z,17Z)-eicosapentaenoate + reduced [NADPH--hemoprotein reductase] + O2 = (17R,18S)-epoxy-(5Z,8Z,11Z,14Z)-eicosatetraenoate + oxidized [NADPH--hemoprotein reductase] + H2O + H(+). The enzyme catalyses (4Z,7Z,10Z,13Z,16Z,19Z)-docosahexaenoate + reduced [NADPH--hemoprotein reductase] + O2 = (19S,20R)-epoxy-(4Z,7Z,10Z,13Z,16Z)-docosapentaenoate + oxidized [NADPH--hemoprotein reductase] + H2O + H(+). It catalyses the reaction (4Z,7Z,10Z,13Z,16Z,19Z)-docosahexaenoate + reduced [NADPH--hemoprotein reductase] + O2 = (19R,20S)-epoxy-(4Z,7Z,10Z,13Z,16Z)-docosapentaenoate + oxidized [NADPH--hemoprotein reductase] + H2O + H(+). The catalysed reaction is all-trans-retinol + reduced [NADPH--hemoprotein reductase] + O2 = all-trans-retinal + oxidized [NADPH--hemoprotein reductase] + 2 H2O + H(+). It carries out the reaction all-trans-retinal + reduced [NADPH--hemoprotein reductase] + O2 = all-trans-retinoate + oxidized [NADPH--hemoprotein reductase] + H2O + 2 H(+). The enzyme catalyses (13S)-hydroperoxy-(9Z,11E)-octadecadienoate = 13-oxo-(9Z,11E)-octadecadienoate + H2O. It catalyses the reaction (12S)-hydroperoxy-(5Z,8Z,10E,14Z)-eicosatetraenoate = 12-oxo-(5Z,8Z,10E,14Z)-eicosatetraenoate + H2O. The catalysed reaction is (15S)-hydroperoxy-(5Z,8Z,11Z,13E)-eicosatetraenoate = 15-oxo-(5Z,8Z,11Z,13E)-eicosatetraenoate + H2O. It carries out the reaction (5S)-hydroperoxy-(6E,8Z,11Z,14Z)-eicosatetraenoate = 5-oxo-(6E,8Z,11Z,14Z)-eicosatetraenoate + H2O. The protein operates within steroid hormone biosynthesis. It functions in the pathway lipid metabolism; fatty acid metabolism. Its pathway is cofactor metabolism; retinol metabolism. Functionally, a cytochrome P450 monooxygenase involved in the metabolism of various endogenous substrates, including fatty acids, steroid hormones and vitamins. Mechanistically, uses molecular oxygen inserting one oxygen atom into a substrate, and reducing the second into a water molecule, with two electrons provided by NADPH via cytochrome P450 reductase (CPR; NADPH-ferrihemoprotein reductase). Catalyzes the hydroxylation of carbon-hydrogen bonds. Exhibits high catalytic activity for the formation of hydroxyestrogens from estrone (E1) and 17beta-estradiol (E2), namely 2-hydroxy E1 and E2, as well as D-ring hydroxylated E1 and E2 at the C15alpha and C16alpha positions. Displays different regioselectivities for polyunsaturated fatty acids (PUFA) hydroxylation. Catalyzes the epoxidation of double bonds of certain PUFA. Converts arachidonic acid toward epoxyeicosatrienoic acid (EET) regioisomers, 8,9-, 11,12-, and 14,15-EET, that function as lipid mediators in the vascular system. Displays an absolute stereoselectivity in the epoxidation of eicosapentaenoic acid (EPA) producing the 17(R),18(S) enantiomer. May play an important role in all-trans retinoic acid biosynthesis in extrahepatic tissues. Catalyzes two successive oxidative transformation of all-trans retinol to all-trans retinal and then to the active form all-trans retinoic acid. May also participate in eicosanoids metabolism by converting hydroperoxide species into oxo metabolites (lipoxygenase-like reaction, NADPH-independent). This chain is Cytochrome P450 1A1 (CYP1A1), found in Cavia porcellus (Guinea pig).